Consider the following 51-residue polypeptide: Large ribosomal subunit protein bL33 (51 aa).

The protein belongs to the bacterial ribosomal protein bL33 family.

This chain is Large ribosomal subunit protein bL33, found in Hahella chejuensis (strain KCTC 2396).